Here is a 473-residue protein sequence, read N- to C-terminus: Ribulose bisphosphate carboxylase large chain 2 (473 aa).

Asn-116 and Thr-166 together coordinate substrate. The active-site Proton acceptor is the Lys-168. Lys-170 lines the substrate pocket. Residues Lys-194, Asp-196, and Glu-197 each contribute to the Mg(2+) site. Lys-194 bears the N6-carboxylysine mark. Residue His-287 is the Proton acceptor of the active site. Residues Arg-288, His-320, and Ser-372 each coordinate substrate.

It belongs to the RuBisCO large chain family. Type I subfamily. Heterohexadecamer of 8 large chains and 8 small chains. It depends on Mg(2+) as a cofactor.

It catalyses the reaction 2 (2R)-3-phosphoglycerate + 2 H(+) = D-ribulose 1,5-bisphosphate + CO2 + H2O. The enzyme catalyses D-ribulose 1,5-bisphosphate + O2 = 2-phosphoglycolate + (2R)-3-phosphoglycerate + 2 H(+). Its function is as follows. RuBisCO catalyzes two reactions: the carboxylation of D-ribulose 1,5-bisphosphate, the primary event in carbon dioxide fixation, as well as the oxidative fragmentation of the pentose substrate. Both reactions occur simultaneously and in competition at the same active site. The protein is Ribulose bisphosphate carboxylase large chain 2 of Cereibacter sphaeroides (strain ATCC 17025 / ATH 2.4.3) (Rhodobacter sphaeroides).